A 358-amino-acid polypeptide reads, in one-letter code: 3-isopropylmalate dehydrogenase (358 aa).

77–90 (GPKWTHLPPDQQPE) is an NAD(+) binding site. Residues Arg98, Arg108, Arg137, and Asp226 each coordinate substrate. 3 residues coordinate Mg(2+): Asp226, Asp250, and Asp254. 284 to 296 (GSAPDIAGKGIAN) is a binding site for NAD(+).

This sequence belongs to the isocitrate and isopropylmalate dehydrogenases family. LeuB type 1 subfamily. As to quaternary structure, homodimer. It depends on Mg(2+) as a cofactor. Mn(2+) serves as cofactor.

It is found in the cytoplasm. The catalysed reaction is (2R,3S)-3-isopropylmalate + NAD(+) = 4-methyl-2-oxopentanoate + CO2 + NADH. It functions in the pathway amino-acid biosynthesis; L-leucine biosynthesis; L-leucine from 3-methyl-2-oxobutanoate: step 3/4. Catalyzes the oxidation of 3-carboxy-2-hydroxy-4-methylpentanoate (3-isopropylmalate) to 3-carboxy-4-methyl-2-oxopentanoate. The product decarboxylates to 4-methyl-2 oxopentanoate. The sequence is that of 3-isopropylmalate dehydrogenase from Mannheimia succiniciproducens (strain KCTC 0769BP / MBEL55E).